The following is a 463-amino-acid chain: Quinolone resistance protein NorB (463 aa).

14 helical membrane-spanning segments follow: residues 17–37 (IGIV…VNVV), 53–73 (IAVS…GGLA), 86–106 (IILN…LLLI), 107–127 (IGRL…LSII), 142–162 (YWSI…GAVA), 165–185 (LGWR…LFLI), 201–221 (FDIK…ILIT), 230–250 (SLLF…FIVL), 273–293 (TASN…NTFV), 299–319 (YSSL…LIMI), 334–354 (PMLI…LTFL), 357–377 (ILYV…LGIY), 403–423 (MASA…YAIV), and 435–455 (IALW…LLLV).

The protein belongs to the major facilitator superfamily. TCR/Tet family.

The protein localises to the cell membrane. Functionally, multidrug efflux pump that acts independently of NorA and is one of the factors that confers resistance against diverse quinolones and chemical compounds. The chain is Quinolone resistance protein NorB (norB) from Staphylococcus aureus (strain MRSA252).